Reading from the N-terminus, the 801-residue chain is Probable inorganic carbon transporter subunit DabA (801 aa).

Zn(2+) is bound by residues C330, D332, H489, and C504.

Belongs to the inorganic carbon transporter (TC 9.A.2) DabA family. Forms a complex with DabB. Zn(2+) is required as a cofactor.

It is found in the cell inner membrane. Functionally, part of an energy-coupled inorganic carbon pump. In Jannaschia sp. (strain CCS1), this protein is Probable inorganic carbon transporter subunit DabA.